The sequence spans 200 residues: Rho GDP-dissociation inhibitor 2 (200 aa).

The segment at 1-40 (MTEKAPEPHVEEDDDELDGKLNYKPPPQKSLKELQEMDKD) is disordered. Thr2 is subject to N-acetylthreonine. An N6-acetyllysine modification is found at Lys20. Tyr23 carries the phosphotyrosine modification. Lys24, Lys39, Lys46, Lys101, and Lys123 each carry N6-acetyllysine. Positions 30 to 40 (SLKELQEMDKD) are enriched in basic and acidic residues. Ser144 bears the Phosphoserine mark. Lys174 is subject to N6-acetyllysine.

It belongs to the Rho GDI family. In terms of assembly, interacts with RHOA. Interacts with RAC1. Interacts with RAC2. Interacts with CDC42.

Its subcellular location is the cytoplasm. It localises to the cytosol. Functionally, regulates the GDP/GTP exchange reaction of the Rho proteins by inhibiting the dissociation of GDP from them, and the subsequent binding of GTP to them. Regulates reorganization of the actin cytoskeleton mediated by Rho family members. This chain is Rho GDP-dissociation inhibitor 2 (ARHGDIB), found in Bos taurus (Bovine).